The following is a 492-amino-acid chain: Glutamyl-tRNA(Gln) amidotransferase subunit A (492 aa).

Residues Lys-78 and Ser-158 each act as charge relay system in the active site. The active-site Acyl-ester intermediate is the Ser-182.

It belongs to the amidase family. GatA subfamily. Heterotrimer of A, B and C subunits.

The catalysed reaction is L-glutamyl-tRNA(Gln) + L-glutamine + ATP + H2O = L-glutaminyl-tRNA(Gln) + L-glutamate + ADP + phosphate + H(+). Allows the formation of correctly charged Gln-tRNA(Gln) through the transamidation of misacylated Glu-tRNA(Gln) in organisms which lack glutaminyl-tRNA synthetase. The reaction takes place in the presence of glutamine and ATP through an activated gamma-phospho-Glu-tRNA(Gln). The sequence is that of Glutamyl-tRNA(Gln) amidotransferase subunit A from Orientia tsutsugamushi (strain Boryong) (Rickettsia tsutsugamushi).